A 514-amino-acid polypeptide reads, in one-letter code: Putative GTP-binding protein 6 (514 aa).

Positions 48–71 (WAGGGPVRGGGEEDPREDEEEEED) are disordered. The segment covering 59-71 (EEDPREDEEEEED) has biased composition (acidic residues). Residues 285–449 (PVVSVVGYTN…ALEASVLRAT (165 aa)) enclose the Hflx-type G domain. The Mg(2+) site is built by Thr298 and Thr319.

Belongs to the TRAFAC class OBG-HflX-like GTPase superfamily. HflX GTPase family. Requires Mg(2+) as cofactor.

This Mus musculus (Mouse) protein is Putative GTP-binding protein 6 (Gtpbp6).